A 184-amino-acid chain; its full sequence is Large ribosomal subunit protein uL22 (184 aa).

This sequence belongs to the universal ribosomal protein uL22 family.

The protein is Large ribosomal subunit protein uL22 (RPL17) of Yarrowia lipolytica (strain CLIB 122 / E 150) (Yeast).